Here is a 301-residue protein sequence, read N- to C-terminus: uncharacterized protein (301 aa).

The Radical SAM core domain occupies 45–286; the sequence is KELSDGWALN…EELGKMFTEL (242 aa).

This is an uncharacterized protein from Acidianus two-tailed virus (ATV).